The chain runs to 638 residues: MPVKKYLLKCLHRLQKGPGYTYKELLVWYCNNTNTHGPKRIICEGPKKKAMWFLLTLLFACLVCWQWGVFIQTYLSWEVSVSLSMGFKTMNFPAVTVCNSSPFQYSKVKHLLKDLDELMEAVLEKILAPEASHSNTTRTLNFTIWNHTPLVLIDERNPDHPVVLNLFGDSHNSSNPAPGSTCNAQGCKVAMRLCSANGTVCTLRNFTSATQAVTEWYILQATNIFSQVLPQDLVGMGYAPDRIILACLFGTEPCSHRNFTPIFYPDYGNCYIFNWGMTEETLPSANPGTEFGLKLILDIGQEDYVPFLASTAGARLMLHEQRTYPFIREEGIYAMAGTETSIGVLVDKLQRKGEPYSPCTMNGSDVAIKNLYSVYNTTYSIQACLHSCFQDHMIRNCSCGHYLYPLPEGEKYCNNRDFPDWAYCYLNLQMSVTQRETCLSMCKESCNDTQYKMTISMADWPSEASEDWILHVLSQERDQSSNITLSRKGIVKLNIYFQEFNYRTIEESPANNIVWLLSNLGGQFGFWMGGSVLCLIEFGEIIIDFIWITIIKLVASCKGLRRRRPQAPYTGPPPTVAELVEAHTNFGFQPDTTSCRPHGEVYPDQQTLPIPGTPPPNYDSLRLQPLDTMESDSEVEAI.

At 1–50 (MPVKKYLLKCLHRLQKGPGYTYKELLVWYCNNTNTHGPKRIICEGPKKKA) the chain is on the cytoplasmic side. The helical transmembrane segment at 51–71 (MWFLLTLLFACLVCWQWGVFI) threads the bilayer. The Extracellular portion of the chain corresponds to 72–530 (QTYLSWEVSV…GGQFGFWMGG (459 aa)). Cystine bridges form between Cys-98–Cys-270, Cys-182–Cys-187, Cys-194–Cys-201, Cys-247–Cys-254, Cys-359–Cys-446, Cys-384–Cys-442, Cys-388–Cys-438, Cys-397–Cys-424, and Cys-399–Cys-413. N-linked (GlcNAc...) asparagine glycosylation is found at Asn-135 and Asn-141. Residue Asn-205 is glycosylated (N-linked (GlcNAc...) asparagine). Residues 531-551 (SVLCLIEFGEIIIDFIWITII) traverse the membrane as a helical segment. The Cytoplasmic portion of the chain corresponds to 552-638 (KLVASCKGLR…MESDSEVEAI (87 aa)). Residues 594–620 (SCRPHGEVYPDQQTLPIPGTPPPNYDS) form a disordered region. The PY motif; recruits WW domain-containing proteins and is thereby required for ubiquitination and inhibition of the channel by NEDD4 and NEDD4L signature appears at 614-618 (PPPNY). A phosphoserine mark is found at Ser-631 and Ser-633.

It belongs to the amiloride-sensitive sodium channel (TC 1.A.6) family. SCNN1B subfamily. In terms of assembly, component of the heterotrimeric epithelial sodium channel (ENaC) composed of an alpha/SCNN1A, a beta/SCNN1B and a gamma/SCNN1G subunit. Interacts with WWP1 (via WW domains). Interacts with WWP2 (via WW domains); inhibits the channel. Interacts with the full-length immature form of PCSK9 (pro-PCSK9). Interacts (N-glycosylated) with BPIFA1; the interaction is direct and inhibits the proteolytic processing of SCNN1A and SCNN1G and the activation of ENaC. In terms of processing, ubiquitinated. Can be ubiquitinated at multiple sites and undergo monoubiquitination and polyubiquitination. Ubiquitination by NEDD4 or NEDD4L inhibits the ENaC channel through endocytosis, intracellular retention and degradation of its individual subunits. However, some studies could not confirm the ubiquitination of this subunit of the ENaC. N-glycosylated. N-glycosylation is required for interaction with BPIFA1. Post-translationally, phosphorylated on serine and threonine residues. Aldosterone and insulin increase the basal level of phosphorylation. As to expression, lung and kidney.

The protein resides in the apical cell membrane. It localises to the cytoplasmic vesicle membrane. It carries out the reaction Na(+)(in) = Na(+)(out). Its activity is regulated as follows. Originally identified and characterized by its inhibition by the diuretic drug amiloride. In terms of biological role, this is one of the three pore-forming subunits of the heterotrimeric epithelial sodium channel (ENaC), a critical regulator of sodium balance and fluid homeostasis. ENaC operates in epithelial tissues, where it mediates the electrodiffusion of sodium ions from extracellular fluid through the apical membrane of cells, with water following osmotically. It plays a key role in maintaining sodium homeostasis through electrogenic sodium reabsorption in the kidneys. This subunit is not essential for ENaC function in airway surface liquid homeostasis and proper mucus clearance. This Mus musculus (Mouse) protein is Epithelial sodium channel subunit beta.